Consider the following 512-residue polypeptide: uncharacterized protein (512 aa).

12 consecutive transmembrane segments (helical) span residues 25–45 (GFYT…VICA), 55–75 (LLYP…PLIL), 96–116 (LVVC…VFLA), 123–143 (VVTG…LPAV), 148–168 (LLLT…LVIV), 183–203 (LLWL…FVGP), 238–258 (MTTY…SLRA), 263–283 (GSLH…SMLW), 294–314 (GLLL…MVAE), 329–349 (FLLA…WISV), 359–379 (LICV…VALG), and 386–406 (ATIW…VASL). The tract at residues 428–512 (YRPATPNPIH…APLDAGQRIA (85 aa)) is disordered.

It is found in the cell membrane. This is an uncharacterized protein from Mycobacterium tuberculosis (strain CDC 1551 / Oshkosh).